The chain runs to 207 residues: Putative threonylcarbamoyl-AMP synthase (207 aa).

Positions 15 to 199 (EEERKKVLEF…KIISIREGVI (185 aa)) constitute a YrdC-like domain.

This sequence belongs to the SUA5 family.

It is found in the cytoplasm. The enzyme catalyses L-threonine + hydrogencarbonate + ATP = L-threonylcarbamoyladenylate + diphosphate + H2O. In terms of biological role, required for the formation of a threonylcarbamoyl group on adenosine at position 37 (t(6)A37) in tRNAs that read codons beginning with adenine. Catalyzes the conversion of L-threonine, HCO(3)(-)/CO(2) and ATP to give threonylcarbamoyl-AMP (TC-AMP) as the acyladenylate intermediate, with the release of diphosphate. The sequence is that of Putative threonylcarbamoyl-AMP synthase from Methanocaldococcus jannaschii (strain ATCC 43067 / DSM 2661 / JAL-1 / JCM 10045 / NBRC 100440) (Methanococcus jannaschii).